We begin with the raw amino-acid sequence, 92 residues long: UPF0473 protein BCE33L4129 (92 aa).

Belongs to the UPF0473 family.

The sequence is that of UPF0473 protein BCE33L4129 from Bacillus cereus (strain ZK / E33L).